A 307-amino-acid chain; its full sequence is Ribonuclease Z (307 aa).

Residues His61, His63, Asp65, His66, His138, Asp208, and His264 each contribute to the Zn(2+) site. The Proton acceptor role is filled by Asp65.

It belongs to the RNase Z family. As to quaternary structure, homodimer. Zn(2+) serves as cofactor.

It catalyses the reaction Endonucleolytic cleavage of RNA, removing extra 3' nucleotides from tRNA precursor, generating 3' termini of tRNAs. A 3'-hydroxy group is left at the tRNA terminus and a 5'-phosphoryl group is left at the trailer molecule.. Zinc phosphodiesterase, which displays some tRNA 3'-processing endonuclease activity. Probably involved in tRNA maturation, by removing a 3'-trailer from precursor tRNA. This chain is Ribonuclease Z, found in Pyrococcus abyssi (strain GE5 / Orsay).